The primary structure comprises 190 residues: Ribose 1,5-bisphosphate phosphokinase PhnN (190 aa).

11 to 18 (GPSGSGKD) contacts ATP.

This sequence belongs to the ribose 1,5-bisphosphokinase family.

It carries out the reaction alpha-D-ribose 1,5-bisphosphate + ATP = 5-phospho-alpha-D-ribose 1-diphosphate + ADP. It participates in metabolic intermediate biosynthesis; 5-phospho-alpha-D-ribose 1-diphosphate biosynthesis; 5-phospho-alpha-D-ribose 1-diphosphate from D-ribose 5-phosphate (route II): step 3/3. In terms of biological role, catalyzes the phosphorylation of ribose 1,5-bisphosphate to 5-phospho-D-ribosyl alpha-1-diphosphate (PRPP). The polypeptide is Ribose 1,5-bisphosphate phosphokinase PhnN (Thiobacillus denitrificans (strain ATCC 25259 / T1)).